The following is a 58-amino-acid chain: Rho-conotoxin TIA (58 aa).

Residues 1–16 (MFTVFLLVVLATTGVS) form the signal peptide. A propeptide spanning residues 17-38 (FTLDRASDGGNAVAKKSDVTAR) is cleaved from the precursor. Residues 40 to 42 (NWR) are interaction with ADRA1B. 2 disulfides stabilise this stretch: Cys43-Cys49 and Cys44-Cys57. The interval 45–47 (LIP) is lacks the Ser-Xaa-Pro motif that is crucial for potent interaction with nAChR. Cys57 is subject to Cysteine amide.

Belongs to the conotoxin A superfamily. In terms of tissue distribution, expressed by the venom duct.

It is found in the secreted. Allosteric inhibitor of alpha-1B adrenergic receptors (ADRA1B). Binds to an allosteric modulatory site on transmembrane helix 6 and 7 at the base of extracellular loop 3 of ADRA1B. Also weakly inhibits alpha-1A (ADRA1A) and alpha-1D (ADRA1D) adrenergic receptors in a competitive manner. Potently inhibits contractions of vas deferens, spleen and aorta in response to noradrenaline. May also inhibits nicotinic acetylcholine receptors with a possible distinct nAChR binding mode from other alpha-conotoxins, due to a different three residue motif (lacks the Ser-Xaa-Pro motif). The protein is Rho-conotoxin TIA of Conus tulipa (Fish-hunting cone snail).